Consider the following 869-residue polypeptide: Ribonucleoside-diphosphate reductase large chain 2 (869 aa).

In terms of domain architecture, ATP-cone spans 1-92 (MYVIKRDGRK…ISNLHKQTTK (92 aa)). ATP contacts are provided by residues 5-6 (KR), 11-17 (EPVQFDK), Thr53, and Asp57. Positions 202 and 217 each coordinate GDP. Cys218 and Cys443 are disulfide-bonded. DTTP is bound by residues 226–228 (DSI), Lys243, Arg256, and 263–264 (AG). Ser227 bears the Phosphoserine mark. Lys387 is covalently cross-linked (Glycyl lysine isopeptide (Lys-Gly) (interchain with G-Cter in ubiquitin)). Asn426 contacts GDP. Asn426 serves as the catalytic Proton acceptor. Cys428 serves as the catalytic Cysteine radical intermediate. Residues Glu430 and 608–611 (TAST) contribute to the GDP site. Catalysis depends on Glu430, which acts as the Proton acceptor. The segment at 793–843 (SALTESSDNEKDASPVPSEQSSVSSAMSNVKLEDSVAPAVPTETIKEDSDE) is disordered. Phosphoserine is present on residues Ser806, Ser827, and Ser868. Residues 806-820 (SPVPSEQSSVSSAMS) show a composition bias toward low complexity.

This sequence belongs to the ribonucleoside diphosphate reductase large chain family. In terms of assembly, heterotetramer of two large (R1) and two small (R2) subunits. S.cerevisiae has two different R1 subunits (RNR1 and RNR3) and two different R2 subunits (RNR2 and RNR4). The functional form of the small subunits is a RNR2-RNR4 heterodimer, where RNR2 provides the iron-radical center and RNR4 is required for proper folding of RNR2 and assembly with the large subunits. Under normal growth conditions, the active form of the large subunits is a homodimer of the constitutively expressed RNR1. In damaged cells or cells arrested for DNA synthesis, the reductase consists of multiple species because of the association of the small subunits (RNR2-RNR4) with either the RNR1 homodimer or a heterodimer of RNR1 and the damage-inducible RNR3.

The protein resides in the cytoplasm. It carries out the reaction a 2'-deoxyribonucleoside 5'-diphosphate + [thioredoxin]-disulfide + H2O = a ribonucleoside 5'-diphosphate + [thioredoxin]-dithiol. Under complex allosteric control mediated by deoxynucleoside triphosphates and ATP binding to separate specificity and activation sites on the large subunit. The type of nucleotide bound at the specificity site determines substrate preference. It seems probable that ATP makes the enzyme reduce CDP and UDP, dGTP favors ADP reduction and dTTP favors GDP reduction. Stimulated by ATP and inhibited by dATP binding to the activity site. Its function is as follows. Provides the precursors necessary for DNA synthesis. Catalyzes the biosynthesis of deoxyribonucleotides from the corresponding ribonucleotides. This Saccharomyces cerevisiae (strain ATCC 204508 / S288c) (Baker's yeast) protein is Ribonucleoside-diphosphate reductase large chain 2 (RNR3).